We begin with the raw amino-acid sequence, 272 residues long: MEAMPSRCLFLLFLSTCKLSPEVVAEVQESSDGPGAQEPMRLTDVQAAMEFIAAAEVAVIGFFQDSEVPAVSLIHSVVQNFQDVSFGISTASEVLAYYNITGNTISLFRLVDNKQLDLKGEDFESMDATKLSRFIESNNLRLVTEYNAITAIGLFNSMIPIHLLLIMNKASSEFEENLHRFQEAAKLFQGRILFILVDSGVKQNEKAISFFKLKMAELPALAIYQTLDDKWDTLPITEVLVEQVQNFCDGFLKGKGLRQNHEAKEKTSKVEL.

The N-terminal stretch at 1-25 (MEAMPSRCLFLLFLSTCKLSPEVVA) is a signal peptide. One can recognise a Thioredoxin domain in the interval 38-151 (EPMRLTDVQA…LVTEYNAITA (114 aa)). An N-linked (GlcNAc...) asparagine glycan is attached at N99. Residues 229–232 (DKWD) form a PDIA3-binding site region. Positions 269–272 (KVEL) match the Prevents secretion from ER motif.

The protein belongs to the protein disulfide isomerase family. Interacts with PDIA3.

It is found in the endoplasmic reticulum lumen. Specifically binds unfolded proteins and may recruit protein disulfide isomerase PDIA3 to unfolded substrates. Binds protein substrates via a hydrophobic pocket in the C-terminal domain. May play a role in the unfolded stress response. The sequence is that of Endoplasmic reticulum resident protein 27 (ERP27) from Bos taurus (Bovine).